A 63-amino-acid chain; its full sequence is Small ribosomal subunit protein bS21 (63 aa).

The protein belongs to the bacterial ribosomal protein bS21 family.

The chain is Small ribosomal subunit protein bS21 from Porphyromonas gingivalis (strain ATCC BAA-308 / W83).